A 306-amino-acid chain; its full sequence is Glutaminase (306 aa).

Substrate is bound by residues S61, N111, E155, N162, Y186, Y238, and V256.

The protein belongs to the glutaminase family. Homotetramer.

It carries out the reaction L-glutamine + H2O = L-glutamate + NH4(+). In Pseudomonas entomophila (strain L48), this protein is Glutaminase.